Reading from the N-terminus, the 692-residue chain is Elongation factor G (692 aa).

Residues 8-282 (ENTRNIGIMA…AVIDYLPSPL (275 aa)) enclose the tr-type G domain. Residues 17-24 (AHIDAGKT), 81-85 (DTPGH), and 135-138 (NKMD) each bind GTP.

It belongs to the TRAFAC class translation factor GTPase superfamily. Classic translation factor GTPase family. EF-G/EF-2 subfamily.

The protein localises to the cytoplasm. Its function is as follows. Catalyzes the GTP-dependent ribosomal translocation step during translation elongation. During this step, the ribosome changes from the pre-translocational (PRE) to the post-translocational (POST) state as the newly formed A-site-bound peptidyl-tRNA and P-site-bound deacylated tRNA move to the P and E sites, respectively. Catalyzes the coordinated movement of the two tRNA molecules, the mRNA and conformational changes in the ribosome. The polypeptide is Elongation factor G (Bacillus thuringiensis subsp. konkukian (strain 97-27)).